A 198-amino-acid chain; its full sequence is MICOS complex subunit MIC26 (198 aa).

Positions methionine 1–serine 25 are cleaved as a signal peptide. The helical transmembrane segment at proline 108–alanine 128 threads the bilayer. O-linked (Xyl...) (chondroitin sulfate) serine glycosylation occurs at serine 162.

It belongs to the apolipoprotein O/MICOS complex subunit Mic27 family. Component of the mitochondrial contact site and cristae organizing system (MICOS) complex, composed of at least MICOS10/MIC10, CHCHD3/MIC19, CHCHD6/MIC25, APOOL/MIC27, IMMT/MIC60, APOO/MIC23/MIC26 and MICOS13/MIC13. This complex was also known under the names MINOS or MitOS complex. The MICOS complex associates with mitochondrial outer membrane proteins SAMM50, MTX1 and MTX2 (together described as components of the mitochondrial outer membrane sorting assembly machinery (SAM) complex) and DNAJC11, mitochondrial inner membrane protein TMEM11 and with HSPA9. The MICOS and SAM complexes together with DNAJC11 are part of a large protein complex spanning both membranes termed the mitochondrial intermembrane space bridging (MIB) complex. Interacts with IMMT/MIC60. Interacts with MICOS10/MIC10 and APOOL/MIC27. In terms of processing, O-glycosylation; glycosaminoglycan of chondroitin-sulfate type.

The protein localises to the mitochondrion inner membrane. It localises to the secreted. It is found in the mitochondrion. The protein resides in the endoplasmic reticulum membrane. Its subcellular location is the golgi apparatus membrane. Component of the MICOS complex, a large protein complex of the mitochondrial inner membrane that plays crucial roles in the maintenance of crista junctions, inner membrane architecture, and formation of contact sites to the outer membrane. Plays a crucial role in crista junction formation and mitochondrial function. Can induce cardiac lipotoxicity by enhancing mitochondrial respiration and fatty acid metabolism in cardiac myoblasts. Promotes cholesterol efflux from macrophage cells. Detected in HDL, LDL and VLDL. Secreted by a microsomal triglyceride transfer protein (MTTP)-dependent mechanism, probably as a VLDL-associated protein that is subsequently transferred to HDL. This Bos taurus (Bovine) protein is MICOS complex subunit MIC26 (APOO).